A 647-amino-acid chain; its full sequence is Threonine--tRNA ligase (647 aa).

One can recognise a TGS domain in the interval 1 to 61; it reads MIKITFPDGA…EEDGSIEIVT (61 aa). The catalytic stretch occupies residues 240 to 538; sequence DHRKLGKELD…LIETYKGAFP (299 aa). Zn(2+) contacts are provided by Cys-334, His-385, and His-515.

This sequence belongs to the class-II aminoacyl-tRNA synthetase family. As to quaternary structure, homodimer. Zn(2+) serves as cofactor.

Its subcellular location is the cytoplasm. The catalysed reaction is tRNA(Thr) + L-threonine + ATP = L-threonyl-tRNA(Thr) + AMP + diphosphate + H(+). Catalyzes the attachment of threonine to tRNA(Thr) in a two-step reaction: L-threonine is first activated by ATP to form Thr-AMP and then transferred to the acceptor end of tRNA(Thr). Also edits incorrectly charged L-seryl-tRNA(Thr). The chain is Threonine--tRNA ligase from Streptococcus pyogenes serotype M3 (strain ATCC BAA-595 / MGAS315).